Consider the following 79-residue polypeptide: Small ribosomal subunit protein uS17 (79 aa).

It belongs to the universal ribosomal protein uS17 family. Part of the 30S ribosomal subunit.

In terms of biological role, one of the primary rRNA binding proteins, it binds specifically to the 5'-end of 16S ribosomal RNA. This chain is Small ribosomal subunit protein uS17, found in Rhizobium rhizogenes (strain K84 / ATCC BAA-868) (Agrobacterium radiobacter).